The sequence spans 427 residues: Anaerobic glycerol-3-phosphate dehydrogenase subunit B (427 aa).

Belongs to the anaerobic G-3-P dehydrogenase subunit B family. As to quaternary structure, composed of a catalytic GlpA/B dimer and of membrane bound GlpC. Requires FMN as cofactor.

It catalyses the reaction a quinone + sn-glycerol 3-phosphate = dihydroxyacetone phosphate + a quinol. It functions in the pathway polyol metabolism; glycerol degradation via glycerol kinase pathway; glycerone phosphate from sn-glycerol 3-phosphate (anaerobic route): step 1/1. Its function is as follows. Conversion of glycerol 3-phosphate to dihydroxyacetone. Uses fumarate or nitrate as electron acceptor. This Glaesserella parasuis serovar 5 (strain SH0165) (Haemophilus parasuis) protein is Anaerobic glycerol-3-phosphate dehydrogenase subunit B.